The primary structure comprises 385 residues: MTMKRPTRIAMVAGELSGDLLGAGVIRELKQHLTNVEFMGVGGPQMLKEGFHSLIDISELSVMGISDVLRRYPQLYLIRERLLREWTINPPDVFIGIDYPDFNLSVEARLKKQHIKTIHLVSPKVWAWRQKRVHLIKKAVDLVLTLFPFEEAFYRQHGVSAQFIGHPLADLIEINPSCSTLRKKYNYHSDDTILAVLPGSRVGEIKYMGPLFLEVMQRIAVERPHVHFIVPIACQDLYPVFFKQLHAEYGHLKIQIIQGNAREAMAISDVVLTKSGTATLEAMLLKRPMVVAFKWGILTHAIIAPQVKVPYIALPNLLAGKKLIPEFVQEKANVDSITESVLNLLDSSNQNELIKQFTDIHCTLRQNANEKAALSILRILGTSLT.

The protein belongs to the LpxB family.

It carries out the reaction a lipid X + a UDP-2-N,3-O-bis[(3R)-3-hydroxyacyl]-alpha-D-glucosamine = a lipid A disaccharide + UDP + H(+). It functions in the pathway bacterial outer membrane biogenesis; LPS lipid A biosynthesis. Its function is as follows. Condensation of UDP-2,3-diacylglucosamine and 2,3-diacylglucosamine-1-phosphate to form lipid A disaccharide, a precursor of lipid A, a phosphorylated glycolipid that anchors the lipopolysaccharide to the outer membrane of the cell. The chain is Lipid-A-disaccharide synthase 2 from Legionella pneumophila subsp. pneumophila (strain Philadelphia 1 / ATCC 33152 / DSM 7513).